We begin with the raw amino-acid sequence, 367 residues long: Epoxide hydrolase 3 (367 aa).

A helical transmembrane segment spans residues 21–41 (GVFFWVLVYVAALLAAVSYIP). Asp173 (nucleophile) is an active-site residue. Tyr285 serves as the catalytic Proton donor. His340 serves as the catalytic Proton acceptor.

The protein belongs to the AB hydrolase superfamily. Epoxide hydrolase family.

It localises to the microsome membrane. It catalyses the reaction an epoxide + H2O = an ethanediol. The enzyme catalyses 9,10-epoxyoctadecanoate + H2O = 9,10-dihydroxyoctadecanoate. The catalysed reaction is 9,10-epoxy-(12Z)-octadecenoate + H2O = 9,10-dihydroxy-(12Z)-octadecenoate. It carries out the reaction 8,9-epoxy-(5Z,11Z,14Z)-eicosatrienoate + H2O = 8,9-dihydroxy-(5Z,11Z,14Z)-eicosatrienoate. It catalyses the reaction 11,12-epoxy-(5Z,8Z,14Z)-eicosatrienoate + H2O = 11,12-dihydroxy-(5Z,8Z,14Z)-eicosatrienoate. The enzyme catalyses 14,15-epoxy-(5Z,8Z,11Z)-eicosatrienoate + H2O = 14,15-dihydroxy-(5Z,8Z,11Z)-eicosatrienoate. Its activity is regulated as follows. Inhibited by 1-(1-acetylpiperidin-4-yl)-3-(4-(trifl uoromethoxy)phenyl)urea (TPAU), 1-cyclohexyl-3-dodecylurea (CDU), 12-(3-adamantan-1-yl-ureido)-dodecanoic acid (AUDA), 1-((3S, 5S, 7S)-adamantan-1-yl)-3-(5-(2-(2-ethoxyethoxy) ethoxy)pentyl)urea (AEPU) and to a lesser extent by 8-(3-((3S, 5S, 7S)-adamantan-1-yl)ureido) octanoic acid (AUOA). In terms of biological role, catalyzes the hydrolysis of epoxide-containing fatty acids. Active in vitro against epoxyeicosatrienoic acids (EETs) including 8,9-EET, 9,10-EET, 11,12-EET and 14,15-EET and leukotoxin. This is Epoxide hydrolase 3 (ephx3) from Xenopus tropicalis (Western clawed frog).